The following is a 197-amino-acid chain: NADH-quinone oxidoreductase subunit I 2 (197 aa).

4Fe-4S ferredoxin-type domains follow at residues Gly42–His71 and Asp91–Glu120. Residues Cys51, Cys54, Cys57, Cys61, Cys100, Cys103, Cys106, and Cys110 each coordinate [4Fe-4S] cluster. The segment at Ala147–Thr197 is disordered. The span at Glu156–Asp169 shows a compositional bias: basic and acidic residues.

This sequence belongs to the complex I 23 kDa subunit family. In terms of assembly, NDH-1 is composed of 14 different subunits. Subunits NuoA, H, J, K, L, M, N constitute the membrane sector of the complex. [4Fe-4S] cluster is required as a cofactor.

The protein resides in the cell membrane. It catalyses the reaction a quinone + NADH + 5 H(+)(in) = a quinol + NAD(+) + 4 H(+)(out). NDH-1 shuttles electrons from NADH, via FMN and iron-sulfur (Fe-S) centers, to quinones in the respiratory chain. The immediate electron acceptor for the enzyme in this species is believed to be ubiquinone. Couples the redox reaction to proton translocation (for every two electrons transferred, four hydrogen ions are translocated across the cytoplasmic membrane), and thus conserves the redox energy in a proton gradient. The sequence is that of NADH-quinone oxidoreductase subunit I 2 from Streptomyces coelicolor (strain ATCC BAA-471 / A3(2) / M145).